We begin with the raw amino-acid sequence, 194 residues long: Lectin-C (194 aa).

Positions 1–26 (MKRSNSIAVMLVLVLSSLMLLLPVEG) are cleaved as a signal peptide. Residues 27-44 (QGHEGHGVGEILLMGKLG) constitute a propeptide, removed in mature form. Chitin-binding type-1 domains are found at residues 45–86 (APVC…QCDY), 87–127 (NRCG…QCSY), and 128–168 (WRCG…QCDL). 12 disulfide bridges follow: Cys-48/Cys-63, Cys-57/Cys-69, Cys-62/Cys-76, Cys-80/Cys-84, Cys-89/Cys-104, Cys-98/Cys-110, Cys-103/Cys-117, Cys-121/Cys-125, Cys-130/Cys-145, Cys-139/Cys-151, Cys-144/Cys-158, and Cys-162/Cys-166. The propeptide at 171–194 (LLPSPLRRIIAIRKLKANLANMLS) is removed in mature form.

In terms of assembly, homodimer. The homodimers are asymmetric; formed in a 'head-to-tail' fashion via hydrophobic interactions between aromatic residues of the carbohydrate-binding sites of each subunit.

N-acetyl-D-glucosamine binding lectin. Almost no hemagglutinating activity towards human erythrocytes. Low mitogenic activity towards human peripheral blood lymphocytes. The polypeptide is Lectin-C (Phytolacca americana (American pokeweed)).